The sequence spans 456 residues: MFS-type transporter ppzB (456 aa).

Helical transmembrane passes span 1-21 (MGLF…PFIM), 38-58 (GFLA…GWAA), 72-92 (VFLF…LLVV), 125-145 (IGTI…LGGV), and 154-174 (AVFA…GLVI). Residues 206–225 (EAQERTHEGTPLLPQDDDDD) form a disordered region. 6 helical membrane passes run 255-275 (LAML…ATVP), 284-304 (FSSL…FALG), 318-338 (AAAT…GLPE), 348-368 (VALF…VTSP), 398-418 (FGFS…LGGV), and 427-447 (VMGA…FLFV).

This sequence belongs to the major facilitator superfamily. TCR/Tet family.

The protein localises to the membrane. Its function is as follows. MFS-type transporter; part of the gene cluster that mediates the biosynthesis of pyrrolopyrazines, secondary metabolites showing insecticidal activity. Probably involved in the secretion of peramine and other pyrrolopyrazines. This Metarhizium majus (strain ARSEF 297) protein is MFS-type transporter ppzB (ppzB).